A 506-amino-acid polypeptide reads, in one-letter code: Histidine ammonia-lyase (506 aa).

A cross-link (5-imidazolinone (Ala-Gly)) is located at residues 144–146 (ASG). S145 carries the post-translational modification 2,3-didehydroalanine (Ser).

It belongs to the PAL/histidase family. Post-translationally, contains an active site 4-methylidene-imidazol-5-one (MIO), which is formed autocatalytically by cyclization and dehydration of residues Ala-Ser-Gly.

The protein resides in the cytoplasm. It carries out the reaction L-histidine = trans-urocanate + NH4(+). Its pathway is amino-acid degradation; L-histidine degradation into L-glutamate; N-formimidoyl-L-glutamate from L-histidine: step 1/3. In Legionella pneumophila subsp. pneumophila (strain Philadelphia 1 / ATCC 33152 / DSM 7513), this protein is Histidine ammonia-lyase.